A 37-amino-acid polypeptide reads, in one-letter code: Mu-agatoxin-Aa1e (37 aa).

Cystine bridges form between Cys-2/Cys-18, Cys-9/Cys-23, Cys-17/Cys-33, and Cys-25/Cys-31. The residue at position 37 (Asn-37) is an Asparagine amide.

Belongs to the neurotoxin 07 (Beta/delta-agtx) family. 03 (aga-4) subfamily. Aga sub-subfamily. Expressed by the venom gland.

It localises to the secreted. In terms of biological role, insecticidal neurotoxin that induces an irreversible spastic paralysis when injected into insects. Modifies presynaptic voltage-gated sodium channels (Nav), causing them to open at the normal resting potential of the nerve. This leads to spontaneous release of neurotransmitter and repetitive action potentials in motor neurons. In Agelenopsis aperta (North American funnel-web spider), this protein is Mu-agatoxin-Aa1e.